The following is a 418-amino-acid chain: Pyruvate decarboxylase 1 (418 aa).

H59 contacts substrate. Positions 337 to 418 are thiamine pyrophosphate binding; that stretch reads DSWFNCQKLK…IFLINNGGYT (82 aa). Mg(2+)-binding residues include D387, N414, and G416.

The protein belongs to the TPP enzyme family. In terms of assembly, homotetramer. The cofactor is a metal cation. Thiamine diphosphate is required as a cofactor. As to expression, leaves.

The catalysed reaction is a 2-oxocarboxylate + H(+) = an aldehyde + CO2. The sequence is that of Pyruvate decarboxylase 1 (PDC1) from Nicotiana tabacum (Common tobacco).